The chain runs to 375 residues: Queuine tRNA-ribosyltransferase (375 aa).

Catalysis depends on Asp-89, which acts as the Proton acceptor. Substrate-binding positions include 89–93, Asp-143, Gln-187, and Gly-214; that span reads DSGGF. The segment at 245–251 is RNA binding; the sequence is GVGKPED. The active-site Nucleophile is the Asp-264. The interval 269–273 is RNA binding; important for wobble base 34 recognition; the sequence is TRNAR. Zn(2+) is bound by residues Cys-302, Cys-304, Cys-307, and His-333.

It belongs to the queuine tRNA-ribosyltransferase family. Homodimer. Within each dimer, one monomer is responsible for RNA recognition and catalysis, while the other monomer binds to the replacement base PreQ1. Zn(2+) is required as a cofactor.

It catalyses the reaction 7-aminomethyl-7-carbaguanine + guanosine(34) in tRNA = 7-aminomethyl-7-carbaguanosine(34) in tRNA + guanine. It functions in the pathway tRNA modification; tRNA-queuosine biosynthesis. Its function is as follows. Catalyzes the base-exchange of a guanine (G) residue with the queuine precursor 7-aminomethyl-7-deazaguanine (PreQ1) at position 34 (anticodon wobble position) in tRNAs with GU(N) anticodons (tRNA-Asp, -Asn, -His and -Tyr). Catalysis occurs through a double-displacement mechanism. The nucleophile active site attacks the C1' of nucleotide 34 to detach the guanine base from the RNA, forming a covalent enzyme-RNA intermediate. The proton acceptor active site deprotonates the incoming PreQ1, allowing a nucleophilic attack on the C1' of the ribose to form the product. After dissociation, two additional enzymatic reactions on the tRNA convert PreQ1 to queuine (Q), resulting in the hypermodified nucleoside queuosine (7-(((4,5-cis-dihydroxy-2-cyclopenten-1-yl)amino)methyl)-7-deazaguanosine). The protein is Queuine tRNA-ribosyltransferase of Photobacterium profundum (strain SS9).